A 678-amino-acid polypeptide reads, in one-letter code: NADPH--cytochrome P450 reductase (678 aa).

Position 2 is an N-acetylglycine (glycine 2). The Lumenal segment spans residues 2 to 22 (GDSHEDTSATMPEAVAEEVSL). The chain crosses the membrane as a helical span at residues 23–43 (FSTTDMVLFSLIVGVLTYWFI). The Cytoplasmic portion of the chain corresponds to 44 to 678 (FRKKKEEIPE…KGRYSLDVWS (635 aa)). A Flavodoxin-like domain is found at 80–224 (IIVFYGSQTG…DFITWREQFW (145 aa)). Residues 86–91 (SQTGTA), 138–141 (ATYG), 173–182 (LGNKTYEHFN), and aspartate 208 each bind FMN. The FAD-binding FR-type domain maps to 279 to 521 (KNPFLAAVTA…FVRKSQFRLP (243 aa)). Arginine 298 is an NADP(+) binding site. Residues arginine 424, 454–457 (RYYS), 472–474 (CAV), tyrosine 478, and 488–491 (GVAT) contribute to the FAD site. NADP(+)-binding positions include threonine 535, 596–597 (SR), 602–606 (KVYVQ), and aspartate 639. Tryptophan 677 is an FAD binding site.

Belongs to the NADPH--cytochrome P450 reductase family. The protein in the N-terminal section; belongs to the flavodoxin family. It in the C-terminal section; belongs to the flavoprotein pyridine nucleotide cytochrome reductase family. FAD serves as cofactor. It depends on FMN as a cofactor.

The protein localises to the endoplasmic reticulum membrane. The enzyme catalyses 2 oxidized [cytochrome P450] + NADPH = 2 reduced [cytochrome P450] + NADP(+) + H(+). Its function is as follows. This enzyme is required for electron transfer from NADP to cytochrome P450 in microsomes. It can also provide electron transfer to heme oxygenase and cytochrome B5. The polypeptide is NADPH--cytochrome P450 reductase (Rattus norvegicus (Rat)).